The sequence spans 230 residues: Flagellar L-ring protein (230 aa).

The first 18 residues, 1 to 18, serve as a signal peptide directing secretion; sequence MNRLNIAVSCLATALLFG. Residue C19 is the site of N-palmitoyl cysteine attachment. Residue C19 is the site of S-diacylglycerol cysteine attachment.

This sequence belongs to the FlgH family. As to quaternary structure, the basal body constitutes a major portion of the flagellar organelle and consists of four rings (L,P,S, and M) mounted on a central rod.

It is found in the cell outer membrane. Its subcellular location is the bacterial flagellum basal body. Functionally, assembles around the rod to form the L-ring and probably protects the motor/basal body from shearing forces during rotation. In Legionella pneumophila (strain Corby), this protein is Flagellar L-ring protein.